A 219-amino-acid chain; its full sequence is Ribose-5-phosphate isomerase A (219 aa).

Residues Ser28–Thr31, Asp81–Asp84, and Lys94–Gly97 each bind substrate. The Proton acceptor role is filled by Glu103. Lys121 contacts substrate.

This sequence belongs to the ribose 5-phosphate isomerase family. Homodimer.

The enzyme catalyses aldehydo-D-ribose 5-phosphate = D-ribulose 5-phosphate. It functions in the pathway carbohydrate degradation; pentose phosphate pathway; D-ribose 5-phosphate from D-ribulose 5-phosphate (non-oxidative stage): step 1/1. Its function is as follows. Catalyzes the reversible conversion of ribose-5-phosphate to ribulose 5-phosphate. In Mannheimia succiniciproducens (strain KCTC 0769BP / MBEL55E), this protein is Ribose-5-phosphate isomerase A.